Consider the following 604-residue polypeptide: Replication protein A 70 kDa DNA-binding subunit B (604 aa).

The segment at residues 170 to 256 is a DNA-binding region (OB); sequence WTIKVRVTNK…QNDYEMTLNE (87 aa). Residues 468 to 488 form a C4-type zinc finger; it reads CKTCNKKVTEAMDSGYWCESC.

Belongs to the replication factor A protein 1 family. In terms of assembly, heterotrimer of RPA1, RPA2 and RPA3 (canonical replication protein A complex).

It is found in the nucleus. Functionally, component of the replication protein A complex (RPA) required for DNA recombination, repair and replication. The activity of RPA is mediated by single-stranded DNA binding and protein interactions. Probably involved in repair of double-strand DNA breaks (DSBs) induced by genotoxic stresses. The chain is Replication protein A 70 kDa DNA-binding subunit B (RPA1B) from Arabidopsis thaliana (Mouse-ear cress).